The primary structure comprises 461 residues: Propanal dehydrogenase (CoA-propanoylating) (461 aa).

The targets protein to the BMC stretch occupies residues 1-18; the sequence is MNTSELETLIRNILSEQL.

Belongs to the EutE/PduP family. Interacts with PduK, probably with its BMC-containing N-terminus. Interacts with shell proteins PduA and PduJ, interacts with PduQ.

It localises to the bacterial microcompartment. It catalyses the reaction propanal + NAD(+) + CoA = propanoyl-CoA + NADH + H(+). It participates in polyol metabolism; 1,2-propanediol degradation. In terms of biological role, a CoA-acylating aldehyde dehydrogenase required for optimal 1,2-propanediol (1,2-PD) degradation. Optimizes growth in the bacterial microcompartment (BMC) dedicated to 1,2-PD degradation by minimizing propionaldehyde toxicity. NAD(+) and NADH are regenerated internally within the Pdu BMC by the PduP and PduQ enzymes, which reduce NAD(+) and oxidize NADH respectively, although there must also be cofactor transport across the BMC. Directly targeted to the BMC. Functionally, expression of a cosmid containing the full 21-gene pdu operon in E.coli allows E.coli to grow on 1,2-propanediol (1,2-PD) with the appearance of bacterial microcompartments (BMC) in its cytoplasm. Its function is as follows. The 1,2-PD-specific bacterial microcompartment (BMC) concentrates low levels of 1,2-PD catabolic enzymes, concentrates volatile reaction intermediates thus enhancing pathway flux and keeps the level of toxic, mutagenic propionaldehyde low. This Citrobacter freundii protein is Propanal dehydrogenase (CoA-propanoylating).